Reading from the N-terminus, the 312-residue chain is Beta-lactamase regulatory protein BlaB (312 aa).

In Streptomyces cacaoi, this protein is Beta-lactamase regulatory protein BlaB (blaB).